The chain runs to 171 residues: uncharacterized protein (171 aa).

Positions 3–171 (KKVAIILANE…FNREIVKQLQ (169 aa)) constitute a PfpI endopeptidase domain.

The protein belongs to the peptidase C56 family.

This is an uncharacterized protein from Staphylococcus aureus (strain MRSA252).